A 58-amino-acid chain; its full sequence is Large ribosomal subunit protein uL30 (58 aa).

This sequence belongs to the universal ribosomal protein uL30 family. As to quaternary structure, part of the 50S ribosomal subunit.

The protein is Large ribosomal subunit protein uL30 of Cytophaga hutchinsonii (strain ATCC 33406 / DSM 1761 / CIP 103989 / NBRC 15051 / NCIMB 9469 / D465).